A 114-amino-acid chain; its full sequence is Vacuolar ATPase assembly integral membrane protein VMA21 (114 aa).

Residues 1–39 (MATRRIISQEKTLLEKDDSIGSSPAADEKSNIAPAVPTS) lie on the Cytoplasmic side of the membrane. Residues 40–60 (VIMKLLAFTLGMIVIPIGSYF) traverse the membrane as a helical segment. Residues 61 to 73 (ATVDSVFNGNSTY) lie on the Lumenal side of the membrane. Residues 74 to 94 (AGALAAIMANVVLIGYIFVAM) traverse the membrane as a helical segment. The Cytoplasmic segment spans residues 95-114 (AEDQSDQQEGGGPGDGKKDR). Residues 111-114 (KKDR) carry the Prevents secretion from ER motif.

The protein belongs to the VMA21 family.

It is found in the endoplasmic reticulum membrane. The protein localises to the endoplasmic reticulum-Golgi intermediate compartment membrane. It localises to the cytoplasmic vesicle. The protein resides in the COPII-coated vesicle membrane. Required for the assembly of the V0 complex of the vacuolar ATPase (V-ATPase) in the endoplasmic reticulum. The chain is Vacuolar ATPase assembly integral membrane protein VMA21 from Chaetomium globosum (strain ATCC 6205 / CBS 148.51 / DSM 1962 / NBRC 6347 / NRRL 1970) (Soil fungus).